A 180-amino-acid chain; its full sequence is Endoribonuclease YbeY (180 aa).

The Zn(2+) site is built by His118, His122, and His128.

The protein belongs to the endoribonuclease YbeY family. Zn(2+) is required as a cofactor.

It localises to the cytoplasm. Single strand-specific metallo-endoribonuclease involved in late-stage 70S ribosome quality control and in maturation of the 3' terminus of the 16S rRNA. This chain is Endoribonuclease YbeY, found in Rhodococcus erythropolis (strain PR4 / NBRC 100887).